The following is a 112-amino-acid chain: C-type natriuretic peptide 3 (112 aa).

The signal sequence occupies residues 1-19; sequence MSLRAFMLCVCLLLQSVGA. The propeptide occupies 20 to 90; the sequence is RPASELQNLE…SKRSWGRYKK (71 aa). The disordered stretch occupies residues 33-67; that stretch reads QDQLSSTEHPEEDRLDRTREEPQLGGSSSREAADE. Positions 40–54 are enriched in basic and acidic residues; that stretch reads EHPEEDRLDRTREEP. A disulfide bridge links Cys-96 with Cys-112.

The protein belongs to the natriuretic peptide family. Spinal cord, kidney, ovary, heart and spleen, and to a lower extent in brain and liver.

It is found in the secreted. In terms of biological role, exhibits natriuretic and vasodepressant activity. Has cGMP-stimulating activity. May help to regulate body fluid homeostasis in a variety of aquatic environments. This chain is C-type natriuretic peptide 3, found in Oryzias latipes (Japanese rice fish).